Reading from the N-terminus, the 564-residue chain is Benomyl/methotrexate resistance protein (564 aa).

The tract at residues 60-101 is disordered; the sequence is IDNQGEPNSSQSSSSNNTIVDNNNNNNNDVDGDKIVVTWDGD. Residues 67-88 are compositionally biased toward low complexity; that stretch reads NSSQSSSSNNTIVDNNNNNNND. Helical transmembrane passes span 116–136, 153–173, 184–204, 210–229, 241–262, 274–294, 358–374, 393–411, 431–451, 457–476, 489–506, and 530–551; these read AFFI…SAVY, VATL…LVFS, TSIY…TALV, LCIL…ATGG, LPVG…GPFF, WTFW…CFTL, IYIA…FEVF, YMSI…IPVI, IPIA…FGWS, HWVG…FLIF, PHYI…RSVI, and WGSS…LFYL.

Belongs to the major facilitator superfamily. CAR1 family.

The protein resides in the membrane. In terms of biological role, probable transporter. Confers resistance to benomyl and methotrexate. This chain is Benomyl/methotrexate resistance protein (MDR1), found in Candida albicans (Yeast).